Here is a 274-residue protein sequence, read N- to C-terminus: ATP synthase subunit a (274 aa).

5 consecutive transmembrane segments (helical) span residues 43–63, 103–123, 144–164, 223–243, and 245–265; these read TLNIDSLFFSVVLGILFLYVF, VIAPLALTVFVWVLLMNVMDL, VVPTADVSVTLSMAIGVFVLI, LIFILIAGLLPWWSQWLLSLP, and AIFHILIITLQAFIFMVLTIV.

Belongs to the ATPase A chain family. In terms of assembly, F-type ATPases have 2 components, CF(1) - the catalytic core - and CF(0) - the membrane proton channel. CF(1) has five subunits: alpha(3), beta(3), gamma(1), delta(1), epsilon(1). CF(0) has three main subunits: a(1), b(2) and c(9-12). The alpha and beta chains form an alternating ring which encloses part of the gamma chain. CF(1) is attached to CF(0) by a central stalk formed by the gamma and epsilon chains, while a peripheral stalk is formed by the delta and b chains.

It is found in the cell inner membrane. Its function is as follows. Key component of the proton channel; it plays a direct role in the translocation of protons across the membrane. This is ATP synthase subunit a from Photorhabdus laumondii subsp. laumondii (strain DSM 15139 / CIP 105565 / TT01) (Photorhabdus luminescens subsp. laumondii).